Consider the following 171-residue polypeptide: NADH-quinone oxidoreductase subunit I 1 (171 aa).

4Fe-4S ferredoxin-type domains follow at residues 41-71 (LSRDPDGEERCVACYLCAAACPVDCIALQAT) and 81-110 (EFFRINFSRCIFCGFCEEACPTDAIQLTPD). C51, C54, C57, C61, C90, C93, C96, and C100 together coordinate [4Fe-4S] cluster.

The protein belongs to the complex I 23 kDa subunit family. NDH-1 is composed of 14 different subunits. Subunits NuoA, H, J, K, L, M, N constitute the membrane sector of the complex. [4Fe-4S] cluster is required as a cofactor.

The protein localises to the cell inner membrane. The catalysed reaction is a quinone + NADH + 5 H(+)(in) = a quinol + NAD(+) + 4 H(+)(out). In terms of biological role, NDH-1 shuttles electrons from NADH, via FMN and iron-sulfur (Fe-S) centers, to quinones in the respiratory chain. The immediate electron acceptor for the enzyme in this species is believed to be ubiquinone. Couples the redox reaction to proton translocation (for every two electrons transferred, four hydrogen ions are translocated across the cytoplasmic membrane), and thus conserves the redox energy in a proton gradient. This is NADH-quinone oxidoreductase subunit I 1 from Nitrosospira multiformis (strain ATCC 25196 / NCIMB 11849 / C 71).